Consider the following 89-residue polypeptide: MVMAMDQNLFNEVMYLLDELSQDTTVPKNVRKVAQDSKTKLSQENESLDLRCATVLSMLDEMANDPNVPSHGRTDLYTIISKLEALAKS.

Belongs to the UPF0147 family.

This chain is UPF0147 protein TV0625, found in Thermoplasma volcanium (strain ATCC 51530 / DSM 4299 / JCM 9571 / NBRC 15438 / GSS1).